A 508-amino-acid polypeptide reads, in one-letter code: ATP synthase subunit alpha (508 aa).

171-178 serves as a coordination point for ATP; that stretch reads GDRQTGKT.

The protein belongs to the ATPase alpha/beta chains family. F-type ATPases have 2 components, CF(1) - the catalytic core - and CF(0) - the membrane proton channel. CF(1) has five subunits: alpha(3), beta(3), gamma(1), delta(1), epsilon(1). CF(0) has three main subunits: a(1), b(2) and c(9-12). The alpha and beta chains form an alternating ring which encloses part of the gamma chain. CF(1) is attached to CF(0) by a central stalk formed by the gamma and epsilon chains, while a peripheral stalk is formed by the delta and b chains.

The protein localises to the cell membrane. The catalysed reaction is ATP + H2O + 4 H(+)(in) = ADP + phosphate + 5 H(+)(out). Its function is as follows. Produces ATP from ADP in the presence of a proton gradient across the membrane. The alpha chain is a regulatory subunit. The polypeptide is ATP synthase subunit alpha (Protochlamydia amoebophila (strain UWE25)).